A 224-amino-acid polypeptide reads, in one-letter code: 2-C-methyl-D-erythritol 4-phosphate cytidylyltransferase (224 aa).

The protein belongs to the IspD/TarI cytidylyltransferase family. IspD subfamily.

The catalysed reaction is 2-C-methyl-D-erythritol 4-phosphate + CTP + H(+) = 4-CDP-2-C-methyl-D-erythritol + diphosphate. Its pathway is isoprenoid biosynthesis; isopentenyl diphosphate biosynthesis via DXP pathway; isopentenyl diphosphate from 1-deoxy-D-xylulose 5-phosphate: step 2/6. Catalyzes the formation of 4-diphosphocytidyl-2-C-methyl-D-erythritol from CTP and 2-C-methyl-D-erythritol 4-phosphate (MEP). This is 2-C-methyl-D-erythritol 4-phosphate cytidylyltransferase from Caldicellulosiruptor saccharolyticus (strain ATCC 43494 / DSM 8903 / Tp8T 6331).